Here is a 621-residue protein sequence, read N- to C-terminus: Solute carrier family 2, facilitated glucose transporter member 12 (621 aa).

Topologically, residues 1 to 48 (MVPVENTEGPNLLNQKGTAVETEGSYRASGSRHPPWARGCGMFTFLSS) are cytoplasmic. A helical transmembrane segment spans residues 49–69 (VTAAVSGLLVGYELGIISGAL). Residues 70–84 (LQIKTLLTLSCHEQE) are Extracellular-facing. A helical membrane pass occupies residues 85-105 (MVVSSLLIGALLASLTGGVLI). At 106–119 (DRYGRRTAIILSSC) the chain is on the cytoplasmic side. The helical transmembrane segment at 120–140 (LLGLGSLVLILSLSYTVLIVG) threads the bilayer. Position 141 (Arg141) is a topological domain, extracellular. The chain crosses the membrane as a helical span at residues 142-162 (IAIGVSISLSSIATCVYIAEI). Over 163–176 (APQHRRGLLVSLNE) the chain is Cytoplasmic. A helical transmembrane segment spans residues 177 to 197 (LMIVIGILSAYISNYAFANVF). Residues 198 to 201 (HGWK) lie on the Extracellular side of the membrane. Residues 202-222 (YMFGLVIPLGILQAIAMYFLP) traverse the membrane as a helical segment. The Cytoplasmic segment spans residues 223 to 282 (PSPRFLVMKGQEGAASKVLGRLRALSDATEELTVIKSSLKDEYQYSFWDLFRSKDNMRTR). Residues 283 to 303 (IMIGLTLVFFVQITGQPNILF) form a helical membrane-spanning segment. The Extracellular segment spans residues 304–321 (YASTVLKSVGFQSNEAAS). Residues 322–342 (LASTGVGVVKVISTIPATLLV) form a helical membrane-spanning segment. Topologically, residues 343 to 349 (DHVGSKT) are cytoplasmic. A helical membrane pass occupies residues 350–370 (FLCIGSSVMAASLVTMGIVNL). At 371 to 470 (NIHMNFTNIC…PAFLKWLSLA (100 aa)) the chain is on the extracellular side. Residues Asn375, Asn387, Asn400, and Asn405 are each glycosylated (N-linked (GlcNAc...) asparagine). A helical transmembrane segment spans residues 471–491 (SLLVYVAAFSIGLGPMPWLVL). Residues 492–502 (SEIFPGGIRGR) lie on the Cytoplasmic side of the membrane. The helical transmembrane segment at 503–523 (AMALTSSMNWGINLLISLTFL) threads the bilayer. The Extracellular segment spans residues 524 to 532 (TVTDLIGLP). The chain crosses the membrane as a helical span at residues 533-553 (WVCFIYTIMSLASLLFVVMFI). Topologically, residues 554–621 (PETKGCSLEQ…GQSRQLSPEN (68 aa)) are cytoplasmic.

It belongs to the major facilitator superfamily. Sugar transporter (TC 2.A.1.1) family. Glucose transporter subfamily.

The protein localises to the cell membrane. It is found in the endomembrane system. The protein resides in the cytoplasm. Its subcellular location is the perinuclear region. It carries out the reaction D-glucose(out) = D-glucose(in). Functionally, insulin-independent facilitative glucose transporter. The chain is Solute carrier family 2, facilitated glucose transporter member 12 from Macaca fascicularis (Crab-eating macaque).